We begin with the raw amino-acid sequence, 217 residues long: Probable rhamnogalacturonan acetylesterase YesY (217 aa).

S11 (nucleophile) is an active-site residue. Residues E178 and H185 contribute to the active site.

Belongs to the 'GDSL' lipolytic enzyme family.

Functionally, may play a role in the degradation of rhamnogalacturonan derived from plant cell walls. Probably has broad substrate specificity and may degrade several types of acetylated substrates. The sequence is that of Probable rhamnogalacturonan acetylesterase YesY (yesY) from Bacillus subtilis (strain 168).